Here is a 1528-residue protein sequence, read N- to C-terminus: Rho GTPase-activating protein 7 (1528 aa).

3 disordered regions span residues 72 to 94, 288 to 310, and 372 to 436; these read DFPG…HEGE, MSAE…PPKV, and ALST…TKPK. Over residues 81-94 the composition is skewed to basic and acidic residues; that stretch reads LSKDVDENDSHEGE. Low complexity predominate over residues 374–384; the sequence is STSSSPSGTPT. Over residues 396 to 436 the composition is skewed to polar residues; it reads GSESGADTISVNQTRVNLSSDTESTDLPSSTPVANSGTKPK. In terms of domain architecture, SAM spans 448 to 515; sequence KAEIEAKEAC…LNKCAVMKLE (68 aa). S523, S526, and S566 each carry phosphoserine. Disordered stretches follow at residues 558 to 617, 732 to 764, 829 to 876, and 928 to 990; these read PKQD…ATPR, RSVS…RTRS, PSGN…SSRL, and SDEG…GVGA. Composition is skewed to low complexity over residues 591-605 and 734-760; these read VSSV…SLPS and VSNS…SPVT. The segment at 710–884 is focal adhesion-targeting (FAT); it reads QLNCVEISAL…RLSIYDNVPG (175 aa). S757 carries the post-translational modification Phosphoserine. A compositionally biased stretch (basic and acidic residues) spans 851-862; the sequence is LRRENSSDSPKE. Polar residues predominate over residues 936–948; it reads ALDSVSPCPSSPK. The span at 950-960 shows a compositional bias: basic and acidic residues; the sequence is IHLDVDNDRTT. The segment covering 961–972 has biased composition (polar residues); that stretch reads PSDLDSTGNSLN. The interval 1051–1073 is polybasic cluster (PBR); it reads KHGFSWAVPKFMKRIKVPDYKDR. The 207-residue stretch at 1078–1284 folds into the Rho-GAP domain; the sequence is VPLTVNVQRT…HMIAECKKLF (207 aa). In terms of domain architecture, START spans 1314–1521; it reads GNDDSADYQH…RDSFSNQNTE (208 aa).

As to quaternary structure, interacts with EF1A1, facilitates EF1A1 distribution to the membrane periphery and ruffles upon growth factor stimulation and suppresses cell migration. Interacts with tensin TNS1 (via N-terminus); the interaction is decreased by phosphorylation of TNS1. Interacts with TNS3 and PTEN; in resting cells, interacts with TNS3 (via C2 tensin-type domain) but, following growth factor stimulation, TNS3 and PTEN are phosphorylated which leads to weakened interaction with TNS3 and enhanced interaction with PTEN. Interacts (via C-terminus) with tensin TNS4 (via SH2 domain); the interaction is independent of tyrosine phosphorylation of DLC1. Highest level of expression in the spleen, with rather lower levels in prostate, testis, ovary, small intestine and colon, but none in the thymus.

It localises to the cytoplasm. Its subcellular location is the cell junction. It is found in the focal adhesion. The protein localises to the membrane. Functionally, functions as a GTPase-activating protein for the small GTPases RHOA, RHOB, RHOC and CDC42, terminating their downstream signaling. This induces morphological changes and detachment through cytoskeletal reorganization, playing a critical role in biological processes such as cell migration and proliferation. Also functions in vivo as an activator of the phospholipase PLCD1. Active DLC1 increases cell migration velocity but reduces directionality. Required for growth factor-induced epithelial cell migration; in resting cells, interacts with TNS3 while PTEN interacts with the p85 regulatory subunit of the PI3K kinase complex but growth factor stimulation induces phosphorylation of TNS3 and PTEN, causing them to change their binding preference so that PTEN interacts with DLC1 and TNS3 interacts with p85. The PTEN-DLC1 complex translocates to the posterior of migrating cells to activate RHOA while the TNS3-p85 complex translocates to the leading edge of migrating cells to promote RAC1 activation. This is Rho GTPase-activating protein 7 (DLC1) from Homo sapiens (Human).